A 1168-amino-acid chain; its full sequence is Transcription-repair-coupling factor (1168 aa).

Residues 633–794 (DMQKSRPMDR…MLGVRDLSVI (162 aa)) enclose the Helicase ATP-binding domain. ATP is bound at residue 646 to 653 (GDVGYGKT). Residues 747–750 (DEEQ) carry the DEEQ box motif. The Helicase C-terminal domain maps to 808–969 (VLEQNMSFIK…GFKIAMRDLN (162 aa)).

In the N-terminal section; belongs to the UvrB family. It in the C-terminal section; belongs to the helicase family. RecG subfamily.

Its subcellular location is the cytoplasm. In terms of biological role, couples transcription and DNA repair by recognizing RNA polymerase (RNAP) stalled at DNA lesions. Mediates ATP-dependent release of RNAP and its truncated transcript from the DNA, and recruitment of nucleotide excision repair machinery to the damaged site. The protein is Transcription-repair-coupling factor of Staphylococcus aureus (strain Mu50 / ATCC 700699).